Reading from the N-terminus, the 218-residue chain is Uracil-DNA glycosylase (218 aa).

Catalysis depends on Asp-60, which acts as the Proton acceptor.

It belongs to the uracil-DNA glycosylase (UDG) superfamily. UNG family.

The protein resides in the cytoplasm. The catalysed reaction is Hydrolyzes single-stranded DNA or mismatched double-stranded DNA and polynucleotides, releasing free uracil.. Its function is as follows. Excises uracil residues from the DNA which can arise as a result of misincorporation of dUMP residues by DNA polymerase or due to deamination of cytosine. This is Uracil-DNA glycosylase from Shewanella oneidensis (strain ATCC 700550 / JCM 31522 / CIP 106686 / LMG 19005 / NCIMB 14063 / MR-1).